The sequence spans 201 residues: MELVLKDAQSALEVSETTFGRDFNEALVHQVVVAYAANARQGTRAQKTRAEVIGSGKKPWRQKGTGRARAGTVKGPIWRGGGVTFAAKAQDHSQKVNKKMYRGALKSIFSELVRQDRLIVVESFSVEAPKTKELKAKLAEMNLEDVLIVTPEIDENLFLAARNLYKVDVRDVAGIDPVSLIAFNKVLVTADAVKQIEEMLG.

A disordered region spans residues Q46–G71.

The protein belongs to the universal ribosomal protein uL4 family. Part of the 50S ribosomal subunit.

One of the primary rRNA binding proteins, this protein initially binds near the 5'-end of the 23S rRNA. It is important during the early stages of 50S assembly. It makes multiple contacts with different domains of the 23S rRNA in the assembled 50S subunit and ribosome. Functionally, forms part of the polypeptide exit tunnel. The sequence is that of Large ribosomal subunit protein uL4 from Shewanella sediminis (strain HAW-EB3).